The primary structure comprises 42 residues: uncharacterized protein (42 aa).

This is an uncharacterized protein from Musa (BBTV).